Consider the following 195-residue polypeptide: MARTARIERKTLESDVLVELDLDGTGISSSDTGVPFFDHMLSQLGKHGGFDLTVRTRGDLHIDAHHTVEDTSIAFGSALREALGDKAGIRRFGDATVPLDEALAQAAVDLSGRPYCVHVEPDLVGMIGTYDTTLTRHIFESITASARLALHVRVLSGRNAHHVVEAQFKAVARALRDAVALDARVAGIPSTKGVL.

The protein belongs to the imidazoleglycerol-phosphate dehydratase family.

Its subcellular location is the cytoplasm. The enzyme catalyses D-erythro-1-(imidazol-4-yl)glycerol 3-phosphate = 3-(imidazol-4-yl)-2-oxopropyl phosphate + H2O. It participates in amino-acid biosynthesis; L-histidine biosynthesis; L-histidine from 5-phospho-alpha-D-ribose 1-diphosphate: step 6/9. This is Imidazoleglycerol-phosphate dehydratase from Frankia casuarinae (strain DSM 45818 / CECT 9043 / HFP020203 / CcI3).